A 492-amino-acid polypeptide reads, in one-letter code: DEAD-box ATP-dependent RNA helicase RhpA (492 aa).

The short motif at 20-48 is the Q motif element; sequence PSFNDLGLKESVLKSVYEAGFTSPSPIQE. One can recognise a Helicase ATP-binding domain in the interval 51-220; the sequence is IPAVLQGRDV…DKILENPIKI (170 aa). 64–71 is a binding site for ATP; it reads AQTGTGKT. The DEAD box signature appears at 168–171; it reads DESD. The Helicase C-terminal domain occupies 231 to 393; sequence DITQRFYVIN…EIPTINENQI (163 aa). The interval 445–492 is disordered; sequence AIQNPKEKTPKPSHKKTPQHERARSFKKGQHRDRHPKTNHHSKKPKRR. Over residues 469 to 492 the composition is skewed to basic residues; sequence SFKKGQHRDRHPKTNHHSKKPKRR.

This sequence belongs to the DEAD box helicase family. As to quaternary structure, homodimer. Interacts with RNase J (rnj), might be a member of a minimal RNA degradosome complex.

It localises to the cytoplasm. It carries out the reaction ATP + H2O = ADP + phosphate + H(+). Functionally, DEAD-box RNA helicase probably involved in RNA degradation. Unwinds dsRNA in both 5'- and 3'-directions. Background RNA-dependent ATPase activity is stimulated about 5-fold by RNaseJ (rnj). Stimulates the dsRNase activity of RNase J. This chain is DEAD-box ATP-dependent RNA helicase RhpA (rhpA), found in Helicobacter pylori (strain B128).